The following is a 410-amino-acid chain: D-amino acid dehydrogenase (410 aa).

Position 9–14 (9–14 (GGGIVG)) interacts with FAD.

Belongs to the DadA oxidoreductase family. The cofactor is FAD.

Its subcellular location is the cell inner membrane. It carries out the reaction a D-alpha-amino acid + a quinone + H2O = a 2-oxocarboxylate + a quinol + NH4(+). Activity is markedly inhibited by benzoate, and moderately by SH reagents such as p-hydroxymercuribenzoate, iodoacetamide, and iodoacetate. In terms of biological role, catalyzes the oxidative deamination of D-amino acids. Has broad substrate specificity; is mostly active on D-proline, and to a lesser extent, on several other D-amino acids such as D-alanine, D-phenylalanine and D-serine. Mediates electron transport from D-proline to coenzyme Q1 in vitro, and is involved in the electron transport chain from D-proline to the c-type cytochrome in vivo. This is D-amino acid dehydrogenase from Helicobacter pylori (Campylobacter pylori).